The sequence spans 230 residues: Stachydrine N-demethylase reductase subunit Stc3 (230 aa).

Belongs to the non-flavoprotein flavin reductase family. The system is probably composed of an oxygenase subunit (Stc2) and two reductase subunits (Stc3 and Stc4).

Its function is as follows. Reductase involved in the catabolism of stachydrine (L-proline betaine), a source of carbon and nitrogen. Part of a Rieske-type oxygenase system that catalyzes the demethylation of stachydrine to produce N-methyl-L-proline (monomethylproline). This subunit is probably involved in the transfer of electrons from NAD(P)H to the catalytic subunit Stc2. The polypeptide is Stachydrine N-demethylase reductase subunit Stc3 (Rhizobium meliloti (strain 1021) (Ensifer meliloti)).